A 229-amino-acid polypeptide reads, in one-letter code: Zinc finger matrin-type protein 4 (229 aa).

2 Matrin-type zinc fingers span residues 14–44 (SYCKVCSAQLISESQRVAHYESRKHASKVRL) and 72–106 (DKNKCCTLCNMSFTSAVVADSHYQGKIHAKRLKLL). Residues 116–135 (TATPLSPLKPPRMDTAPVVA) are disordered. 2 consecutive Matrin-type zinc fingers follow at residues 145–175 (RYCGLCAAWFNNPLMAQQHYDGKKHKKNAAR) and 198–228 (YRCTICSVSLNSIEQYHAHLKGSKHQTNLKN).

It is found in the nucleus. The sequence is that of Zinc finger matrin-type protein 4 (ZMAT4) from Homo sapiens (Human).